A 727-amino-acid polypeptide reads, in one-letter code: MNKGWLELESDPGLFTLLVEDFGVKGVQVEEIYDLQSKCQGPVYGFIFLFKWIEERRSRRKVSTLVDDTSVIDDDIVNSMFFAHQLIPNSCATHALLSVLLNCSNVDLGPTLSRMKDFTKGFSPESKGYAIGNAPELAKAHNSHARPEPRHLPEKQNGLSAVRTMEAFHFVSYVPITGRLFELDGLKVYPIDHGPWGEDEEWTDKARRVIMERIGLATAGEPYHDIRFNLMAVVPDRRVKYEARLHVLKGNRQTVLEALQQLIRVTQPELIQTHKSQESQLPEESKPASSKSPFGLEAGRTPAASECTHTDGAEEVAGSCPQTTTHSPPSKSKLVVKPSGSSLNGVPPTPTPIVQRLPAFLDNHNYAKSPMQEEEDLAAGVGRSRVPVRPQQYSDDEEDYEDEEEDVQNTSSAIRYKRKGTGKPGSLSNSSDGQLSVLQPNTINVLTEKLQESQKDLSIPLSIKTSSGAGSPAVAVPTHSQPSPTPSNESTDTASEIGSAFNSPLRSPIRSANPTRPSSPVTSHISKVLFGEDDSLLRVDCIRYNRAVRDLGPVISTGLLHLAEDGVLSPLALTEGGKGSSPSTRSSQGSQGSSSLEEKEVVEVTDSRDKSGLNRSSEPLSGEKYSPKELLALLKCVEAEIANYEACLKEEVEKRKKFKIDDQRRTHNYDEFICTFISMLAQEGMLANLVEQNISVRRRQGVSIGRLHKQRKPDRRKRSRPYKAKRQ.

Residues 4 to 235 (GWLELESDPG…IRFNLMAVVP (232 aa)) enclose the UCH catalytic domain. The Arg-finger motif motif lies at 56-60 (RRSRR). Cysteine 91 acts as the Nucleophile in catalysis. Catalysis depends on histidine 169, which acts as the Proton donor. Residues 273–351 (THKSQESQLP…SLNGVPPTPT (79 aa)) form a disordered region. Residue serine 292 is modified to Phosphoserine. Residues 320–330 (CPQTTTHSPPS) show a composition bias toward polar residues. Positions 363 to 366 (NHNY) match the HBM-like motif motif. Residues serine 369 and serine 394 each carry the phosphoserine modification. Disordered regions lie at residues 372 to 435 (QEEE…DGQL) and 462 to 522 (SIKT…SPVT). The segment covering 394–407 (SDDEEDYEDEEEDV) has biased composition (acidic residues). 2 stretches are compositionally biased toward polar residues: residues 426-435 (SLSNSSDGQL) and 478-522 (THSQ…SPVT). Threonine 491 carries the post-translational modification Phosphothreonine. Residues serine 519, serine 535, serine 583, and serine 595 each carry the phosphoserine modification. Residues 573-622 (LTEGGKGSSPSTRSSQGSQGSSSLEEKEVVEVTDSRDKSGLNRSSEPLSG) are disordered. Residues 580–595 (SSPSTRSSQGSQGSSS) show a composition bias toward low complexity. Positions 594–719 (SSLEEKEVVE…QRKPDRRKRS (126 aa)) are interaction with BRCA1. The segment covering 596-612 (LEEKEVVEVTDSRDKSG) has biased composition (basic and acidic residues). Positions 628-659 (KELLALLKCVEAEIANYEACLKEEVEKRKKFK) form a coiled coil. Positions 640–684 (EIANYEACLKEEVEKRKKFKIDDQRRTHNYDEFICTFISMLAQEG) are interaction with YY1. The ULD domain occupies 668–696 (NYDEFICTFISMLAQEGMLANLVEQNISV). The segment at 697–699 (RRR) is interaction with nucleosomal DNA forming a DNA clamp with ASXL1. The short motif at 697–720 (RRRQGVSIGRLHKQRKPDRRKRSR) is the Classical bipartite Nuclear localization signal (NLS) element. The interval 702-727 (VSIGRLHKQRKPDRRKRSRPYKAKRQ) is disordered. The tract at residues 711–727 (RKPDRRKRSRPYKAKRQ) is positively charged C-terminal extension (CTE). Positions 715–720 (RRKRSR) match the Nuclear localization signal motif. The Non-classical PY-nuclear localization signal (PY-NLS) motif lies at 715–722 (RRKRSRPY).

It belongs to the peptidase C12 family. BAP1 subfamily. Core component of the polycomb repressive deubiquitinase (PR-DUB) complex, at least composed of BAP1, one of ASXL1, ASXL2 or (probably) ASXL3, and one of MBD5 or MBD6. The PR-DUB core associates with a number of accessory proteins, including FOXK1, FOXK2, KDM1B, HCFC1, YY1 and OGT; KDM1B specifically associates with ASXL2 PR-DUB complexes. The BAP1 deubiquitinase activity is not required for PR-DUB assembly. Homodimerize (via coiled-coil hinge-region between the UCH and ULD domains) to mediate assembly of 2 copies of the BAP1-ASXL heterodimer into a bisymmetric tetramer; dimerization enhances association with nucleosomes. The PR-DUB complex associates with nucleosomes to mediate deubiquitination of 'lys-120' of histone H2AK118ub1 substrates; the association requires the positively charged C-terminal tail of BAP1. Interacts (via ULD domain) with ASXL1 (via DEUBAD domain); the interaction is direct and forms a ubiquitin binding cleft. The interaction with ASXL1 stabilizes BAP1 but is not required for nucleosome binding. Associates (via C-terminus) with nucleosome and chromatosome complexes through direct interaction with DNA and the histone3/4 dimer; this association displaces the histone-2A C-terminal tail, extending and orienting the H2AK118ub1 substrate towards the BAP1 deubiquitinase active site. Also interacts (via arginine finger) directly with the histone H2A-H2B acidic patch; this interaction is not critical for nucleosome-chromatosome association but may play a role in orienting the H2AK118ub1 substrate towards the PR-DUB complex active site. Interacts with BRCA1 (via the RING finger). Interacts (via HBM-like motif) with HCFC1. Interacts (via a C-terminal region overlapping the ULD domain) with YY1; the interaction is direct and requires the interaction with HCFC1. Interacts (when phosphorylated at Thr-491) with FOXK1. Interacts (when phosphorylated at Thr-491) with FOXK2; leading to recruitment of the PR-DUB complex and repression of FOXK2 target genes. Interacts (via non-classical PY-NLS) with TNPO1/transportin-1 (via HEAT repeats 8-12); the interaction is direct, mediates BAP1 nuclear localization and disrupts BAP1 homodimerization. Interacts (via C-terminus) with KPNA1/importin alpha5 and KPNA2/importin alpha1; these interactions can contribute to BAP1 nuclear localization but are less important than the interaction with TNPO1/transportin-1. The interaction with TNPO1/transportin-1 disrupts homodimerization and blocks ubiquitination by UBE2O. In terms of processing, ubiquitinated: monoubiquitinated at multiple sites within its nuclear localization signal (NLS) BY UBE2O, leading to cytoplasmic retention. Able to mediate autodeubiquitination via intramolecular interactions to counteract cytoplasmic retention. Monoubiquitinated on at least 4 sites near or within its PY-NLS.

Its subcellular location is the cytoplasm. The protein resides in the nucleus. The protein localises to the chromosome. It catalyses the reaction Thiol-dependent hydrolysis of ester, thioester, amide, peptide and isopeptide bonds formed by the C-terminal Gly of ubiquitin (a 76-residue protein attached to proteins as an intracellular targeting signal).. Its function is as follows. Deubiquitinating enzyme that plays a key role in chromatin by mediating deubiquitination of histone H2A and HCFC1. Catalytic component of the polycomb repressive deubiquitinase (PR-DUB) complex, a complex that specifically mediates deubiquitination of histone H2A monoubiquitinated at 'Lys-120' (H2AK119ub1). Does not deubiquitinate monoubiquitinated histone H2B. The PR-DUB complex is an epigenetic regulator of gene expression and acts as a transcriptional coactivator, affecting genes involved in development, cell communication, signaling, cell proliferation and cell viability. Antagonizes PRC1 mediated H2AK119ub1 monoubiquitination. As part of the PR-DUB complex, associates with chromatin enriched in histone marks H3K4me1, H3K4me3, and H3K27Ac, but not in H3K27me3. Acts as a regulator of cell growth by mediating deubiquitination of HCFC1 N-terminal and C-terminal chains, with some specificity toward 'Lys-48'-linked polyubiquitin chains compared to 'Lys-63'-linked polyubiquitin chains. Deubiquitination of HCFC1 does not lead to increase stability of HCFC1. Interferes with the BRCA1 and BARD1 heterodimer activity by inhibiting their ability to mediate ubiquitination and autoubiquitination. It however does not mediate deubiquitination of BRCA1 and BARD1. Able to mediate autodeubiquitination via intramolecular interactions to counteract monoubiquitination at the nuclear localization signal (NLS), thereby protecting it from cytoplasmic sequestration. Acts as a tumor suppressor. Negatively regulates epithelial-mesenchymal transition (EMT) of trophoblast stem cells during placental development by regulating genes involved in epithelial cell integrity, cell adhesion and cytoskeletal organization. This is Ubiquitin carboxyl-terminal hydrolase BAP1 (Bap1) from Rattus norvegicus (Rat).